We begin with the raw amino-acid sequence, 137 residues long: Holo-[acyl-carrier-protein] synthase (137 aa).

Residues aspartate 8 and glutamate 57 each coordinate Mg(2+).

It belongs to the P-Pant transferase superfamily. AcpS family. Mg(2+) is required as a cofactor.

It localises to the cytoplasm. The enzyme catalyses apo-[ACP] + CoA = holo-[ACP] + adenosine 3',5'-bisphosphate + H(+). In terms of biological role, transfers the 4'-phosphopantetheine moiety from coenzyme A to a Ser of acyl-carrier-protein. The sequence is that of Holo-[acyl-carrier-protein] synthase from Mesorhizobium japonicum (strain LMG 29417 / CECT 9101 / MAFF 303099) (Mesorhizobium loti (strain MAFF 303099)).